A 344-amino-acid chain; its full sequence is Dihydroorotate dehydrogenase (quinone) (344 aa).

FMN-binding positions include 65–69 and Thr-89; that span reads AGLDK. Lys-69 contacts substrate. 114–118 contacts substrate; it reads NRMGF. FMN-binding residues include Asn-145 and Asn-178. Asn-178 lines the substrate pocket. Residue Ser-181 is the Nucleophile of the active site. A substrate-binding site is contributed by Asn-183. FMN contacts are provided by Lys-223 and Thr-251. 252–253 lines the substrate pocket; it reads NT. Residues Gly-274, Gly-303, and 324–325 contribute to the FMN site; that span reads YS.

The protein belongs to the dihydroorotate dehydrogenase family. Type 2 subfamily. Monomer. Requires FMN as cofactor.

The protein resides in the cell membrane. The catalysed reaction is (S)-dihydroorotate + a quinone = orotate + a quinol. It participates in pyrimidine metabolism; UMP biosynthesis via de novo pathway; orotate from (S)-dihydroorotate (quinone route): step 1/1. Catalyzes the conversion of dihydroorotate to orotate with quinone as electron acceptor. The polypeptide is Dihydroorotate dehydrogenase (quinone) (Cupriavidus necator (strain ATCC 17699 / DSM 428 / KCTC 22496 / NCIMB 10442 / H16 / Stanier 337) (Ralstonia eutropha)).